We begin with the raw amino-acid sequence, 854 residues long: SH2 domain-containing protein 3C (854 aa).

Residue Ser-22 is modified to Phosphoserine. Residues 34-43 (RSSASASIRS) are compositionally biased toward low complexity. The segment at 34–129 (RSSASASIRS…AKEAGEGTEA (96 aa)) is disordered. Positions 99–124 (EVSRESHLVSRRLPEPPDLEAAKEAG) are enriched in basic and acidic residues. The SH2 domain occupies 215–314 (WYHGRIPREV…QSGAIIYCPV (100 aa)). 2 positions are modified to phosphotyrosine: Tyr-273 and Tyr-278. Disordered stretches follow at residues 330–384 (SQGS…PRDS), 398–417 (LHSPLSPISESPSSPAYSTV), and 422–520 (APSA…ERQK). Over residues 333–347 (SSKTASPASPSGSKG) the composition is skewed to low complexity. Ser-354 is subject to Phosphoserine. 3 stretches are compositionally biased toward low complexity: residues 400–415 (SPLSPISESPSSPAYS), 422–436 (APSATPSTSAQPASP), and 474–485 (SPSPSLSSYSDP). Residue Ser-435 is modified to Phosphoserine. Basic and acidic residues predominate over residues 508-520 (TPRKARGSGERQK). Positions 580 to 848 (DARTLARHVT…TALSHKLEPA (269 aa)) constitute a Ras-GEF domain. Tyr-787 bears the Phosphotyrosine mark.

As to quaternary structure, component of a complex comprised of SH2D3C, BCAR1/CAS, and CRK. Within the complex, interacts with CRK and (via C-terminus) with BCAR1/CAS (via C-terminus). Interacts with NEDD9/HEF1. Interacts with EPHB2. Interacts with NEDD9/HEF1. Interacts with BCAR1/CAS. Interacts with PTK2B. In terms of assembly, interacts (via C-terminus) with BCAR1/CAS (via C-terminus). Interacts with IGF1. Post-translationally, phosphorylated by MAPK/ERK upon T-cell receptor stimulation in T-cells. As to expression, expressed in the olfactory bulb and olfactory sensory neurons (at protein level). Expressed in B cells (at protein level). Expressed in T lymphocytes. In terms of tissue distribution, expressed in hematopoietic cells from spleen, lymph node and thymus (at protein level). Expressed weakly in the lung (at protein level). Expressed in the brain, lung, kidney, and weakly expressed in the liver and lung (at protein level).

The protein localises to the cytoplasm. Its subcellular location is the cell membrane. The protein resides in the cell projection. It is found in the axon. It localises to the ruffle membrane. Its function is as follows. Acts as an adapter protein that mediates cell signaling pathways involved in cellular functions such as cell adhesion and migration, tissue organization, and the regulation of the immune response. Plays a role in integrin-mediated cell adhesion through BCAR1-CRK-RAPGEF1 signaling and activation of the small GTPase RAP1. Promotes cell migration and invasion through the extracellular matrix. Required for marginal zone B-cell development and thymus-independent type 2 immune responses. Mediates migration and adhesion of B cells in the splenic marginal zone via promoting hyperphosphorylation of NEDD9/CASL. Plays a role in CXCL13-induced chemotaxis of B-cells. Plays a role in the migration of olfactory sensory neurons (OSNs) into the forebrain and the innervation of the olfactory bulb by the OSN axons during development. Required for the efficient tyrosine phosphorylation of BCAR1 in OSN axons. Functionally, important regulator of chemokine-induced, integrin-mediated T lymphocyte adhesion and migration, acting upstream of RAP1. Required for tissue-specific adhesion of T lymphocytes to peripheral tissues. Required for basal and CXCL2 stimulated serine-threonine phosphorylation of NEDD9. May be involved in the regulation of T-cell receptor-mediated IL2 production through the activation of the JNK pathway in T-cells. In terms of biological role, may be involved in the BCAR1/CAS-mediated JNK activation pathway. The chain is SH2 domain-containing protein 3C (Sh2d3c) from Mus musculus (Mouse).